The primary structure comprises 374 residues: MLVKAHLRKQGINPLKVRKKGISLLGAGKKVKPMDIALFTRQMATMMGAGVPLLQSFDIIGEGFDNPNMRKLVDEIKQEVSSGNSLANSLRKKPQYFDELYCNLVDAGEQSGALENLLDRVATYKEKTESLKAKIRKAMTYPIAVIIVALIVSAILLIKVVPQFQSVFQGFGAELPAFTQMVVNLSEFLQEWWLAVIVGVGAIGFTFKELHKRSKKFRDTLDRTILKLPIFGGIVYKSAVARYARTLSTTFAAGVPLVDALDSVSGATGNIVFKNAVSKIKQDVSTGMQLNFSMRTTSVFPNMAIQMTAIGEESGSLDEMLSKVASYYEEEVDNAVDNLTTLMEPMIMAVLGVLVGGLIVAMYLPIFQLGNVVG.

3 helical membrane passes run 138–158, 187–207, and 347–367; these read AMTY…ILLI, EFLQ…GFTF, and IMAV…LPIF.

The protein belongs to the GSP F family. As to quaternary structure, homotetramer. Interacts with PilB.

The protein localises to the cell inner membrane. Functionally, essential inner membrane component of the type IV pilus (T4P) that plays a role in surface and host cell adhesion, colonization, biofilm maturation, virulence, and twitching, a form of surface-associated motility facilitated by cycles of extension, adhesion, and retraction of T4P fibers. Controls both pilus assembly and disassembly and plays an important role in PilB localization to the complex and ATPase activity. The chain is Type IV pilus assembly protein PilC (pilC) from Pseudomonas aeruginosa (strain ATCC 15692 / DSM 22644 / CIP 104116 / JCM 14847 / LMG 12228 / 1C / PRS 101 / PAO1).